Here is a 135-residue protein sequence, read N- to C-terminus: uncharacterized protein (135 aa).

The chain crosses the membrane as a helical span at residues Leu-4–Thr-24.

It localises to the membrane. This is an uncharacterized protein from Methanocaldococcus jannaschii (strain ATCC 43067 / DSM 2661 / JAL-1 / JCM 10045 / NBRC 100440) (Methanococcus jannaschii).